Here is a 386-residue protein sequence, read N- to C-terminus: GTPase Obg (386 aa).

Residues 4 to 162 enclose the Obg domain; that stretch reads SNFVDYVKIY…RTVILQLKLL (159 aa). Positions 18–44 are disordered; the sequence is KGGRGSSHFRREKYIPKGGPDGGDGGR. Residues 163–329 enclose the OBG-type G domain; sequence ADVGLVGFPN…LKDLLWKELN (167 aa). Residues 169–176, 194–198, 216–219, 283–286, and 310–312 contribute to the GTP site; these read GFPNAGKS, FTTLE, DIPG, TKSD, and SSI. Residues serine 176 and threonine 196 each contribute to the Mg(2+) site. Residues 357–386 are disordered; the sequence is YIFPVDEDEDDPDEEYEEYWDDDEDEDTRK.

Belongs to the TRAFAC class OBG-HflX-like GTPase superfamily. OBG GTPase family. As to quaternary structure, monomer. Mg(2+) serves as cofactor.

It is found in the cytoplasm. An essential GTPase which binds GTP, GDP and possibly (p)ppGpp with moderate affinity, with high nucleotide exchange rates and a fairly low GTP hydrolysis rate. Plays a role in control of the cell cycle, stress response, ribosome biogenesis and in those bacteria that undergo differentiation, in morphogenesis control. This is GTPase Obg from Parabacteroides distasonis (strain ATCC 8503 / DSM 20701 / CIP 104284 / JCM 5825 / NCTC 11152).